The following is a 378-amino-acid chain: Odorant receptor 45a (378 aa).

Over 1–30 (MDASYFAVQRRALEIVGFDPSTPQLSLKHP) the chain is Cytoplasmic. Residues 31-51 (IWAGILILSLISHNWPMVVYA) traverse the membrane as a helical segment. Topologically, residues 52–129 (LQDLSDLTRL…RYVARSFRNA (78 aa)) are extracellular. A helical membrane pass occupies residues 130–150 (AYGVICASAIAPMLLGLWGYV). Residues 151-173 (ETGVFTPTTPMEFNFWLDERKPH) lie on the Cytoplasmic side of the membrane. The helical transmembrane segment at 174-194 (FYWPIYVWGVLGVAAAAWLAI) threads the bilayer. Residues 195–197 (ATD) are Extracellular-facing. A helical transmembrane segment spans residues 198 to 218 (TLFSWLTHNVVIQFQLLELVL). Over 219–249 (EEKDLNGGDSRLTGFVSRHRIALDLAKELSS) the chain is Cytoplasmic. Residues 250-270 (IFGEIVFVKYMLSYLQLCMLA) traverse the membrane as a helical segment. Topologically, residues 271–285 (FRFSRSGWSAQVPFR) are extracellular. The chain crosses the membrane as a helical span at residues 286 to 306 (ATFLVAIIIQLSSYCYGGEYI). Residues 307–342 (KQQSLAIAQAVYGQINWPEMTPKKRRLWQMVIMRAQ) are Cytoplasmic-facing. A helical transmembrane segment spans residues 343-363 (RPAKIFGFMFVVDLPLLLWVI). At 364–378 (RTAGSFLAMLRTFER) the chain is on the extracellular side.

Belongs to the insect chemoreceptor superfamily. Heteromeric odorant receptor channel (TC 1.A.69) family. Or1a subfamily. In terms of assembly, interacts with Orco. Complexes exist early in the endomembrane system in olfactory sensory neurons (OSNs), coupling these complexes to the conserved ciliary trafficking pathway.

The protein localises to the cell membrane. Odorant receptor which mediates acceptance or avoidance behavior, depending on its substrates. The odorant receptor repertoire encodes a large collection of odor stimuli that vary widely in identity, intensity, and duration. May form a complex with Orco to form odorant-sensing units, providing sensitive and prolonged odorant signaling and calcium permeability. Involved in the behavioral responses to hexanol, pentyl acetate, benzyl acetate, and 2-heptanone. In Drosophila melanogaster (Fruit fly), this protein is Odorant receptor 45a (Or45a).